A 693-amino-acid chain; its full sequence is Protein-glutamine gamma-glutamyltransferase E (693 aa).

A Phosphotyrosine modification is found at tyrosine 111. The residue at position 112 (threonine 112) is a Phosphothreonine. 4 residues coordinate Ca(2+): alanine 222, asparagine 225, asparagine 227, and aspartate 228. Residue cysteine 273 is part of the active site. Aspartate 302, aspartate 304, asparagine 306, serine 308, and aspartate 325 together coordinate Ca(2+). Catalysis depends on residues histidine 331 and aspartate 354. Ca(2+) contacts are provided by asparagine 394, threonine 416, glutamate 444, and glutamate 449. The disordered stretch occupies residues 455–482 (KAMNKLKPNASFGATSSRGPQGEEKEPS).

Belongs to the transglutaminase superfamily. Transglutaminase family. In terms of assembly, consists of two polypeptide chains, which are synthesized as a precursor form of a single polypeptide. Ca(2+) is required as a cofactor. Post-translationally, activated by proteolytic processing. In vitro activation is commonly achieved by cleavage with dispase, a neutral bacterial protease. Physiological activation may be catalyzed by CTSL and, to a lesser extent, by CTSS.

The protein resides in the cytoplasm. It carries out the reaction L-glutaminyl-[protein] + L-lysyl-[protein] = [protein]-L-lysyl-N(6)-5-L-glutamyl-[protein] + NH4(+). Catalyzes the calcium-dependent formation of isopeptide cross-links between glutamine and lysine residues in various proteins, as well as the conjugation of polyamines to proteins. Involved in the formation of the cornified envelope (CE), a specialized component consisting of covalent cross-links of proteins beneath the plasma membrane of terminally differentiated keratinocytes. Catalyzes small proline-rich proteins and LOR cross-linking to form small interchain oligomers, which are further cross-linked by TGM1 onto the growing CE scaffold. In hair follicles, involved in cross-linking structural proteins to hardening the inner root sheath. This chain is Protein-glutamine gamma-glutamyltransferase E (Tgm3), found in Rattus norvegicus (Rat).